We begin with the raw amino-acid sequence, 273 residues long: Putative phosphoenolpyruvate synthase regulatory protein (273 aa).

Residue G153 to T160 coordinates ADP.

Belongs to the pyruvate, phosphate/water dikinase regulatory protein family. PSRP subfamily.

It carries out the reaction [pyruvate, water dikinase] + ADP = [pyruvate, water dikinase]-phosphate + AMP + H(+). The enzyme catalyses [pyruvate, water dikinase]-phosphate + phosphate + H(+) = [pyruvate, water dikinase] + diphosphate. Functionally, bifunctional serine/threonine kinase and phosphorylase involved in the regulation of the phosphoenolpyruvate synthase (PEPS) by catalyzing its phosphorylation/dephosphorylation. The protein is Putative phosphoenolpyruvate synthase regulatory protein of Paracidovorax citrulli (strain AAC00-1) (Acidovorax citrulli).